A 416-amino-acid polypeptide reads, in one-letter code: Thyroid hormone receptor alpha (416 aa).

Residues 1 to 30 form a disordered region; it reads MEPISNVEDPNSSEGDEKRWPDGPKRKRKN. Positions 1–58 are modulating; sequence MEPISNVEDPNSSEGDEKRWPDGPKRKRKNSTCSVKSMSALSLSVQGYIPSYLEKDEP. Positions 15–24 are enriched in basic and acidic residues; it reads GDEKRWPDGP. Zn(2+)-binding residues include Cys-59, Cys-62, Cys-76, Cys-79, Cys-97, Cys-103, Cys-113, and Cys-116. NR C4-type zinc fingers lie at residues 59 to 79 and 97 to 121; these read CVVC…CEGC and CKYD…FRKC. The nuclear receptor DNA-binding region spans 59 to 133; sequence CVVCGDKATG…VCMAMDLVLD (75 aa). The region spanning 169–413 is the NR LBD domain; sequence SEWELIRHVT…PPLFLEVFED (245 aa). Arg-234 and Ser-283 together coordinate 3,3',5-triiodo-L-thyronine.

Belongs to the nuclear hormone receptor family. NR1 subfamily.

It localises to the nucleus. In terms of biological role, nuclear hormone receptor that can act as a repressor or activator of transcription. High affinity receptor for thyroid hormones, including triiodothyronine and thyroxine. The polypeptide is Thyroid hormone receptor alpha (thra1) (Salmo salar (Atlantic salmon)).